Here is a 318-residue protein sequence, read N- to C-terminus: Olfactory receptor 2T3 (318 aa).

The Extracellular segment spans residues 1-30; it reads MCSGNQTSQNQTASTDFTLTGLFAESKHAA. N-linked (GlcNAc...) asparagine glycans are attached at residues asparagine 5 and asparagine 10. The chain crosses the membrane as a helical span at residues 31-54; sequence LLYTVTFLLFLMALTGNALLILLI. Topologically, residues 55 to 62 are cytoplasmic; it reads HSEPRLHT. The helical transmembrane segment at 63–84 threads the bilayer; it reads PMYFFISQLALMDLMYLCVTVP. At 85–105 the chain is on the extracellular side; sequence KMLVGQVTGDDTISPSGCGIQ. A disulfide bond links cysteine 102 and cysteine 194. A helical membrane pass occupies residues 106-125; it reads MFFYLTLAGAEVFLLAAMAY. The Cytoplasmic segment spans residues 126 to 144; that stretch reads DRYAAVCRPLHYPLLMNQR. Residues 145-163 form a helical membrane-spanning segment; the sequence is VCQLLVSACWVLGMVDGLL. Topologically, residues 164–200 are extracellular; it reads LTPITMSFPFCQSRKILSFFCETPALLKLSCSDVSLY. Residues 201 to 224 form a helical membrane-spanning segment; that stretch reads KTLMYLCCILMLLAPIMVISSSYT. The Cytoplasmic segment spans residues 225–241; the sequence is LILHLIHRMNSAAGHRK. The chain crosses the membrane as a helical span at residues 242 to 264; sequence ALATCSSHMIIVLLLFGASFYTY. At 265–277 the chain is on the extracellular side; it reads MLPSSYHTAEQDM. A helical transmembrane segment spans residues 278–297; it reads MVSAFYTIFTPVLNPLIYSL. Over 298 to 318 the chain is Cytoplasmic; it reads RNKDVTRALRSMMQSRMNQEK.

The protein belongs to the G-protein coupled receptor 1 family.

It localises to the cell membrane. Odorant receptor. This chain is Olfactory receptor 2T3 (OR2T3), found in Homo sapiens (Human).